The primary structure comprises 264 residues: MICOS complex subunit MIC27 (264 aa).

Residues 1-27 constitute a mitochondrion transit peptide; it reads MAALRMGKLTTMPTGLIYASISVHVAK. Residues 28 to 110 are Mitochondrial intermembrane-facing; sequence EEESKKQLVK…YVYLKNPPRD (83 aa). A helical transmembrane segment spans residues 111–129; sequence FLPKIGVITVSGLAGFISA. Residues 130-137 lie on the Mitochondrial matrix side of the membrane; sequence RKGSRFKR. Residues 138 to 155 traverse the membrane as a helical segment; sequence IAYPLGLATLGATVCYPV. At 156–264 the chain is on the mitochondrial intermembrane side; sequence QSVIIAKVAG…EDIDMYSTRS (109 aa). A compositionally biased stretch (basic and acidic residues) spans 189-198; sequence KLPEHKEKTK. The interval 189–264 is disordered; sequence KLPEHKEKTK…EDIDMYSTRS (76 aa). A compositionally biased stretch (low complexity) spans 223-238; the sequence is AELSSETKTKSTSGAT. Residues 245 to 256 are compositionally biased toward basic and acidic residues; sequence KLMDHGQSHPED.

Belongs to the apolipoprotein O/MICOS complex subunit Mic27 family. As to quaternary structure, component of the mitochondrial contact site and cristae organizing system (MICOS) complex, composed of at least MICOS10/MIC10, CHCHD3/MIC19, CHCHD6/MIC25, APOOL/MIC27, IMMT/MIC60, APOO/MIC23/MIC26 and QIL1/MIC13. This complex was also known under the names MINOS or MitOS complex. The MICOS complex associates with mitochondrial outer membrane proteins SAMM50, MTX1 and MTX2 (together described as components of the mitochondrial outer membrane sorting assembly machinery (SAM) complex) and DNAJC11, mitochondrial inner membrane protein TMEM11 and with HSPA9. The MICOS and SAM complexes together with DNAJC11 are part of a large protein complex spanning both membranes termed the mitochondrial intermembrane space bridging (MIB) complex. Interacts with MICOS10/MIC10, IMMT/MIC60 and APOO/MIC23/MIC26.

The protein localises to the mitochondrion inner membrane. Its subcellular location is the mitochondrion. Component of the MICOS complex, a large protein complex of the mitochondrial inner membrane that plays crucial roles in the maintenance of crista junctions, inner membrane architecture, and formation of contact sites to the outer membrane. Specifically binds to cardiolipin (in vitro) but not to the precursor lipid phosphatidylglycerol. Plays a crucial role in crista junction formation and mitochondrial function. This chain is MICOS complex subunit MIC27 (APOL), found in Bos taurus (Bovine).